A 127-amino-acid chain; its full sequence is Large ribosomal subunit protein bL12 (127 aa).

The protein belongs to the bacterial ribosomal protein bL12 family. As to quaternary structure, homodimer. Part of the ribosomal stalk of the 50S ribosomal subunit. Forms a multimeric L10(L12)X complex, where L10 forms an elongated spine to which 2 to 4 L12 dimers bind in a sequential fashion. Binds GTP-bound translation factors.

Forms part of the ribosomal stalk which helps the ribosome interact with GTP-bound translation factors. Is thus essential for accurate translation. In Desulforapulum autotrophicum (strain ATCC 43914 / DSM 3382 / VKM B-1955 / HRM2) (Desulfobacterium autotrophicum), this protein is Large ribosomal subunit protein bL12.